The chain runs to 108 residues: Nucleoid-associated protein Bmul_1447/BMULJ_01796 (108 aa).

Residues 84 to 108 (EATSQEKMSGMTSGLPLPPGFKLPF) form a disordered region. The span at 85 to 95 (ATSQEKMSGMT) shows a compositional bias: polar residues. A compositionally biased stretch (pro residues) spans 99–108 (PLPPGFKLPF).

It belongs to the YbaB/EbfC family. As to quaternary structure, homodimer.

The protein resides in the cytoplasm. It localises to the nucleoid. In terms of biological role, binds to DNA and alters its conformation. May be involved in regulation of gene expression, nucleoid organization and DNA protection. This Burkholderia multivorans (strain ATCC 17616 / 249) protein is Nucleoid-associated protein Bmul_1447/BMULJ_01796.